Reading from the N-terminus, the 199-residue chain is Glycerol-3-phosphate acyltransferase (199 aa).

5 consecutive transmembrane segments (helical) span residues 3 to 23 (AAVW…GVLV), 50 to 70 (WGPA…AVLV), 78 to 98 (DWML…SVFL), 113 to 133 (LLFL…SVIL), and 154 to 174 (LALG…LLIF).

It belongs to the PlsY family. Probably interacts with PlsX.

The protein localises to the cell inner membrane. The enzyme catalyses an acyl phosphate + sn-glycerol 3-phosphate = a 1-acyl-sn-glycero-3-phosphate + phosphate. It participates in lipid metabolism; phospholipid metabolism. Its function is as follows. Catalyzes the transfer of an acyl group from acyl-phosphate (acyl-PO(4)) to glycerol-3-phosphate (G3P) to form lysophosphatidic acid (LPA). This enzyme utilizes acyl-phosphate as fatty acyl donor, but not acyl-CoA or acyl-ACP. The protein is Glycerol-3-phosphate acyltransferase of Thermus thermophilus (strain ATCC BAA-163 / DSM 7039 / HB27).